Reading from the N-terminus, the 121-residue chain is Neuromedin-B (121 aa).

The N-terminal stretch at 1–24 (MARRAGGARMFGSLLLFALLAAGV) is a signal peptide. Met56 bears the Methionine amide mark. Positions 60 to 121 (SLEPSSPSPL…RRLLVQILQK (62 aa)) are excised as a propeptide.

Belongs to the bombesin/neuromedin-B/ranatensin family.

It is found in the secreted. Its subcellular location is the cell projection. The protein localises to the neuron projection. Stimulates smooth muscle contraction. Induces sighing by acting directly on the pre-Botzinger complex, a cluster of several thousand neurons in the ventrolateral medulla responsible for inspiration during respiratory activity. Contributes to the induction of sneezing following exposure to chemical irritants or allergens which causes release of NMB by nasal sensory neurons and activation of NMBR-expressing neurons in the sneeze-evoking region of the brainstem. These in turn activate neurons of the caudal ventral respiratory group, giving rise to the sneezing response. Contributes to induction of acute itch, possibly through activation of the NMBR receptor on dorsal root ganglion neurons. Increases expression of NMBR and steroidogenic mediators STAR, CYP11A1 and HSD3B1 in Leydig cells, induces secretion of testosterone by Leydig cells and also promotes Leydig cell proliferation. Plays a role in the innate immune response to influenza A virus infection by enhancing interferon alpha expression and reducing expression of IL6. Plays a role in CSF1-induced proliferation of osteoclast precursors by contributing to the positive regulation of the expression of the CSF1 receptor CSF1R. The sequence is that of Neuromedin-B (NMB) from Homo sapiens (Human).